The primary structure comprises 504 residues: ATP synthase subunit beta (504 aa).

181-188 (GGAGVGKT) contributes to the ATP binding site.

Belongs to the ATPase alpha/beta chains family. F-type ATPases have 2 components, CF(1) - the catalytic core - and CF(0) - the membrane proton channel. CF(1) has five subunits: alpha(3), beta(3), gamma(1), delta(1), epsilon(1). CF(0) has three main subunits: a(1), b(2) and c(9-12). The alpha and beta chains form an alternating ring which encloses part of the gamma chain. CF(1) is attached to CF(0) by a central stalk formed by the gamma and epsilon chains, while a peripheral stalk is formed by the delta and b chains.

The protein resides in the cell inner membrane. It catalyses the reaction ATP + H2O + 4 H(+)(in) = ADP + phosphate + 5 H(+)(out). Functionally, produces ATP from ADP in the presence of a proton gradient across the membrane. The catalytic sites are hosted primarily by the beta subunits. This chain is ATP synthase subunit beta, found in Ehrlichia ruminantium (strain Gardel).